The following is a 275-amino-acid chain: Large ribosomal subunit protein uL2 (275 aa).

Over residues 35–49 the composition is skewed to polar residues; it reads DSQSSTAGRNNNGRI. Disordered regions lie at residues 35–59 and 224–275; these read DSQSSTAGRNNNGRITTRHKGGGHK and AMNP…RHKR. Positions 50 to 59 are enriched in basic residues; it reads TTRHKGGGHK.

Belongs to the universal ribosomal protein uL2 family. As to quaternary structure, part of the 50S ribosomal subunit. Forms a bridge to the 30S subunit in the 70S ribosome.

One of the primary rRNA binding proteins. Required for association of the 30S and 50S subunits to form the 70S ribosome, for tRNA binding and peptide bond formation. It has been suggested to have peptidyltransferase activity; this is somewhat controversial. Makes several contacts with the 16S rRNA in the 70S ribosome. In Burkholderia orbicola (strain AU 1054), this protein is Large ribosomal subunit protein uL2.